We begin with the raw amino-acid sequence, 498 residues long: Glycerol kinase (498 aa).

An ADP-binding site is contributed by Thr12. Residues Thr12, Thr13, and Ser14 each contribute to the ATP site. A sn-glycerol 3-phosphate-binding site is contributed by Thr12. Arg16 lines the ADP pocket. Positions 82, 83, 134, and 243 each coordinate sn-glycerol 3-phosphate. Positions 82, 83, 134, 243, and 244 each coordinate glycerol. The ADP site is built by Thr265 and Gly308. The ATP site is built by Thr265, Gly308, Gln312, and Gly409. ADP is bound by residues Gly409 and Asn413.

This sequence belongs to the FGGY kinase family. As to quaternary structure, homotetramer and homodimer (in equilibrium).

It catalyses the reaction glycerol + ATP = sn-glycerol 3-phosphate + ADP + H(+). It participates in polyol metabolism; glycerol degradation via glycerol kinase pathway; sn-glycerol 3-phosphate from glycerol: step 1/1. Its activity is regulated as follows. Activated by phosphorylation and inhibited by fructose 1,6-bisphosphate (FBP). Functionally, key enzyme in the regulation of glycerol uptake and metabolism. Catalyzes the phosphorylation of glycerol to yield sn-glycerol 3-phosphate. The sequence is that of Glycerol kinase from Clostridium botulinum (strain 657 / Type Ba4).